A 375-amino-acid chain; its full sequence is uncharacterized protein (375 aa).

In terms of domain architecture, GP-PDE spans 52–301 (VLLSAHRGSW…KQGFATYHES (250 aa)).

This is an uncharacterized protein from Sinorhizobium fredii (strain NBRC 101917 / NGR234).